The following is a 100-amino-acid chain: Small ribosomal subunit protein uS14c (100 aa).

It belongs to the universal ribosomal protein uS14 family. Part of the 30S ribosomal subunit.

The protein resides in the plastid. It localises to the chloroplast. In terms of biological role, binds 16S rRNA, required for the assembly of 30S particles. This Tetradesmus obliquus (Green alga) protein is Small ribosomal subunit protein uS14c.